A 463-amino-acid polypeptide reads, in one-letter code: uncharacterized protein (463 aa).

Positions 12–70 (LWQQGSVVELTITGLNHQGEGIGRFNERVVFVPDTAPGDRLEVRLVKVKRNYALAQLLK) constitute a TRAM domain. Residues cysteine 83, cysteine 89, cysteine 92, and cysteine 171 each contribute to the [4Fe-4S] cluster site. S-adenosyl-L-methionine is bound by residues glutamine 295, tyrosine 324, glutamate 345, and aspartate 390. Cysteine 417 (nucleophile) is an active-site residue.

This sequence belongs to the class I-like SAM-binding methyltransferase superfamily. RNA M5U methyltransferase family.

This is an uncharacterized protein from Synechocystis sp. (strain ATCC 27184 / PCC 6803 / Kazusa).